Consider the following 166-residue polypeptide: Lipoprotein signal peptidase (166 aa).

The next 4 membrane-spanning stretches (helical) occupy residues 11-31 (LNLVIILVVFIFDRTTKLYIL), 42-62 (IYITPFLNLFLIWNKGIAFGL), 69-89 (VIYNSITILIGLIIIAIIFMM), and 99-119 (FFALIAGGAFGNFYDRIVYTA). Catalysis depends on residues Asp122 and Asp140. The chain crosses the membrane as a helical span at residues 133–153 (WFVFNVADIFITIGVFCLILV).

The protein belongs to the peptidase A8 family.

It localises to the cell inner membrane. It catalyses the reaction Release of signal peptides from bacterial membrane prolipoproteins. Hydrolyzes -Xaa-Yaa-Zaa-|-(S,diacylglyceryl)Cys-, in which Xaa is hydrophobic (preferably Leu), and Yaa (Ala or Ser) and Zaa (Gly or Ala) have small, neutral side chains.. It functions in the pathway protein modification; lipoprotein biosynthesis (signal peptide cleavage). Its function is as follows. This protein specifically catalyzes the removal of signal peptides from prolipoproteins. The sequence is that of Lipoprotein signal peptidase from Pelagibacter ubique (strain HTCC1062).